Consider the following 390-residue polypeptide: Imidazolonepropionase (390 aa).

2 residues coordinate Fe(3+): H71 and H73. Residues H71 and H73 each contribute to the Zn(2+) site. Positions 80, 138, and 165 each coordinate 4-imidazolone-5-propanoate. Y138 provides a ligand contact to N-formimidoyl-L-glutamate. Fe(3+) is bound at residue H228. Position 228 (H228) interacts with Zn(2+). Q231 lines the 4-imidazolone-5-propanoate pocket. D302 is a binding site for Fe(3+). Position 302 (D302) interacts with Zn(2+). N-formimidoyl-L-glutamate is bound by residues N304 and G306. S307 contacts 4-imidazolone-5-propanoate.

This sequence belongs to the metallo-dependent hydrolases superfamily. HutI family. Zn(2+) serves as cofactor. The cofactor is Fe(3+).

The protein localises to the cytoplasm. It carries out the reaction 4-imidazolone-5-propanoate + H2O = N-formimidoyl-L-glutamate. The protein operates within amino-acid degradation; L-histidine degradation into L-glutamate; N-formimidoyl-L-glutamate from L-histidine: step 3/3. Catalyzes the hydrolytic cleavage of the carbon-nitrogen bond in imidazolone-5-propanoate to yield N-formimidoyl-L-glutamate. It is the third step in the universal histidine degradation pathway. This Streptomyces griseus subsp. griseus (strain JCM 4626 / CBS 651.72 / NBRC 13350 / KCC S-0626 / ISP 5235) protein is Imidazolonepropionase.